An 83-amino-acid chain; its full sequence is RNA-binding protein Hfq (83 aa).

The Sm domain occupies 9–69 (DYFLNQLRKD…ISTFAPARNV (61 aa)).

This sequence belongs to the Hfq family. In terms of assembly, homohexamer.

Its function is as follows. RNA chaperone that binds small regulatory RNA (sRNAs) and mRNAs to facilitate mRNA translational regulation in response to envelope stress, environmental stress and changes in metabolite concentrations. Also binds with high specificity to tRNAs. This is RNA-binding protein Hfq from Exiguobacterium sibiricum (strain DSM 17290 / CCUG 55495 / CIP 109462 / JCM 13490 / 255-15).